The sequence spans 213 residues: Adenylate kinase (213 aa).

G10–T15 serves as a coordination point for ATP. An NMP region spans residues S30–I59. AMP contacts are provided by residues R36, N57–I59, G83–R86, and Q90. Residues N125 to D160 form an LID region. R126 serves as a coordination point for ATP. Zn(2+)-binding residues include C129 and C132. I135 to Y136 provides a ligand contact to ATP. Zn(2+)-binding residues include C146 and C149. AMP-binding residues include R157 and R169. L195 lines the ATP pocket.

It belongs to the adenylate kinase family. As to quaternary structure, monomer.

Its subcellular location is the cytoplasm. It carries out the reaction AMP + ATP = 2 ADP. The protein operates within purine metabolism; AMP biosynthesis via salvage pathway; AMP from ADP: step 1/1. Its function is as follows. Catalyzes the reversible transfer of the terminal phosphate group between ATP and AMP. Plays an important role in cellular energy homeostasis and in adenine nucleotide metabolism. The sequence is that of Adenylate kinase from Wolbachia sp. subsp. Drosophila simulans (strain wRi).